Consider the following 104-residue polypeptide: L-rhamnose mutarotase (104 aa).

A substrate-binding site is contributed by Tyr-18. Catalysis depends on His-22, which acts as the Proton donor. Substrate is bound by residues Tyr-41 and 76-77; that span reads WW.

The protein belongs to the rhamnose mutarotase family. Homodimer.

The protein resides in the cytoplasm. It catalyses the reaction alpha-L-rhamnose = beta-L-rhamnose. It functions in the pathway carbohydrate metabolism; L-rhamnose metabolism. In terms of biological role, involved in the anomeric conversion of L-rhamnose. In Lactiplantibacillus plantarum (strain ATCC BAA-793 / NCIMB 8826 / WCFS1) (Lactobacillus plantarum), this protein is L-rhamnose mutarotase.